Reading from the N-terminus, the 36-residue chain is Photosystem I reaction center subunit VIII (36 aa).

The chain crosses the membrane as a helical span at residues 7–29 (PSILVPLVGILLPAVTMASLFLY).

Belongs to the PsaI family.

Its subcellular location is the plastid. The protein resides in the chloroplast thylakoid membrane. Functionally, may help in the organization of the PsaL subunit. The sequence is that of Photosystem I reaction center subunit VIII from Adiantum capillus-veneris (Maidenhair fern).